The chain runs to 48 residues: Toxin CSTX-14 (48 aa).

4 disulfide bridges follow: C3/C18, C10/C27, C17/C42, and C29/C40.

It belongs to the neurotoxin 19 (CSTX) family. 12 subfamily. Heterodimer of A and B chains; disulfide-linked. Post-translationally, contains 4 disulfide bonds. Expressed by the venom gland.

It is found in the secreted. The protein is Toxin CSTX-14 of Cupiennius salei (American wandering spider).